A 1550-amino-acid chain; its full sequence is Gag-Pol polyprotein (1550 aa).

Residue Gly-2 is the site of N-myristoyl glycine; by host attachment. Residues Val-7 to Leu-31 are interaction with Gp41. Residues Leu-16–Arg-22 carry the Nuclear export signal motif. Residues Lys-26–Lys-32 carry the Nuclear localization signal motif. The tract at residues Ala-110–Pro-136 is disordered. The residue at position 135 (Tyr-135) is a Phosphotyrosine; by host. The tract at residues Asn-191–Gln-228 is interaction with human PPIA/CYPA and NUP153. The dimerization/Multimerization of capsid protein p24 stretch occupies residues Tyr-279–Met-365. CCHC-type zinc fingers lie at residues Ile-389–Ala-406 and Gln-410–Glu-427. The tract at residues Pro-437–Arg-508 is disordered. Residues Thr-456 to Gly-469 are compositionally biased toward low complexity. Basic and acidic residues predominate over residues Arg-497–Arg-508. The dimerization of protease stretch occupies residues Pro-513–Leu-517. A Peptidase A2 domain is found at Val-532 to Ile-601. The For protease activity; shared with dimeric partner role is filled by Asp-537. Dimerization of protease regions lie at residues Gly-561–Asn-567 and Asn-600–Pro-612. The Reverse transcriptase domain maps to Glu-655–Leu-845. 3 residues coordinate Mg(2+): Asp-721, Asp-796, and Asp-797. Residues Phe-838 to Trp-846 are RT 'primer grip'. Residues Trp-1008–Trp-1024 carry the Tryptophan repeat motif motif. Positions Ile-1044–Arg-1167 constitute an RNase H type-1 domain. The Mg(2+) site is built by Asp-1053, Glu-1088, Asp-1108, and Asp-1159. The Integrase-type zinc-finger motif lies at Glu-1173–Gln-1214. Zn(2+)-binding residues include His-1182, His-1186, Cys-1210, and Cys-1213. The region spanning Gln-1223–Ile-1374 is the Integrase catalytic domain. Mg(2+) is bound by residues Asp-1234, Asp-1286, and Glu-1322. The segment at residues Phe-1393–Asp-1440 is a DNA-binding region (integrase-type).

As to quaternary structure, homotrimer; further assembles as hexamers of trimers. Interacts with gp41 (via C-terminus). Interacts with host CALM1; this interaction induces a conformational change in the Matrix protein, triggering exposure of the myristate group. Interacts with host AP3D1; this interaction allows the polyprotein trafficking to multivesicular bodies during virus assembly. Part of the pre-integration complex (PIC) which is composed of viral genome, matrix protein, Vpr and integrase. In terms of assembly, homodimer; the homodimer further multimerizes as homohexamers or homopentamers. Interacts with human PPIA/CYPA. Interacts with human NUP153. Interacts with host PDZD8; this interaction stabilizes the capsid. Interacts with monkey TRIM5; this interaction destabilizes the capsid. Homodimer, whose active site consists of two apposed aspartic acid residues. As to quaternary structure, heterodimer of p66 RT and p51 RT (RT p66/p51). Heterodimerization of RT is essential for DNA polymerase activity. The overall folding of the subdomains is similar in p66 RT and p51 RT but the spatial arrangements of the subdomains are dramatically different. In terms of assembly, homotetramer; may further associate as a homohexadecamer. Part of the pre-integration complex (PIC) which is composed of viral genome, matrix protein, Vpr and integrase. Interacts with human SMARCB1/INI1 and human PSIP1/LEDGF isoform 1. Interacts with human KPNA3; this interaction might play a role in nuclear import of the pre-integration complex. Interacts with human NUP153; this interaction might play a role in nuclear import of the pre-integration complex. The cofactor is Mg(2+). In terms of processing, specific enzymatic cleavages by the viral protease yield mature proteins. The protease is released by autocatalytic cleavage. The polyprotein is cleaved during and after budding, this process is termed maturation. Proteolytic cleavage of p66 RT removes the RNase H domain to yield the p51 RT subunit. Nucleocapsid protein p7 might be further cleaved after virus entry.

Its subcellular location is the host cell membrane. The protein resides in the host endosome. It localises to the host multivesicular body. It is found in the virion membrane. The protein localises to the host nucleus. Its subcellular location is the host cytoplasm. The protein resides in the virion. The enzyme catalyses Endopeptidase for which the P1 residue is preferably hydrophobic.. The catalysed reaction is Endohydrolysis of RNA in RNA/DNA hybrids. Three different cleavage modes: 1. sequence-specific internal cleavage of RNA. Human immunodeficiency virus type 1 and Moloney murine leukemia virus enzymes prefer to cleave the RNA strand one nucleotide away from the RNA-DNA junction. 2. RNA 5'-end directed cleavage 13-19 nucleotides from the RNA end. 3. DNA 3'-end directed cleavage 15-20 nucleotides away from the primer terminus.. It catalyses the reaction 3'-end directed exonucleolytic cleavage of viral RNA-DNA hybrid.. It carries out the reaction DNA(n) + a 2'-deoxyribonucleoside 5'-triphosphate = DNA(n+1) + diphosphate. Its activity is regulated as follows. Protease: The viral protease is inhibited by many synthetic protease inhibitors (PIs), such as amprenavir, atazanavir, indinavir, loprinavir, nelfinavir, ritonavir and saquinavir. Use of protease inhibitors in tritherapy regimens permit more ambitious therapeutic strategies. Reverse transcriptase/ribonuclease H: RT can be inhibited either by nucleoside RT inhibitors (NRTIs) or by non nucleoside RT inhibitors (NNRTIs). NRTIs act as chain terminators, whereas NNRTIs inhibit DNA polymerization by binding a small hydrophobic pocket near the RT active site and inducing an allosteric change in this region. Classical NRTIs are abacavir, adefovir (PMEA), didanosine (ddI), lamivudine (3TC), stavudine (d4T), tenofovir (PMPA), zalcitabine (ddC), and zidovudine (AZT). Classical NNRTIs are atevirdine (BHAP U-87201E), delavirdine, efavirenz (DMP-266), emivirine (I-EBU), and nevirapine (BI-RG-587). The tritherapies used as a basic effective treatment of AIDS associate two NRTIs and one NNRTI. Its function is as follows. Mediates, with Gag polyprotein, the essential events in virion assembly, including binding the plasma membrane, making the protein-protein interactions necessary to create spherical particles, recruiting the viral Env proteins, and packaging the genomic RNA via direct interactions with the RNA packaging sequence (Psi). Gag-Pol polyprotein may regulate its own translation, by the binding genomic RNA in the 5'-UTR. At low concentration, the polyprotein would promote translation, whereas at high concentration, the polyprotein would encapsidate genomic RNA and then shut off translation. Functionally, targets the polyprotein to the plasma membrane via a multipartite membrane-binding signal, that includes its myristoylated N-terminus. Matrix protein is part of the pre-integration complex. Implicated in the release from host cell mediated by Vpu. Binds to RNA. In terms of biological role, forms the conical core that encapsulates the genomic RNA-nucleocapsid complex in the virion. Most core are conical, with only 7% tubular. The core is constituted by capsid protein hexamer subunits. The core is disassembled soon after virion entry. Host restriction factors such as TRIM5-alpha or TRIMCyp bind retroviral capsids and cause premature capsid disassembly, leading to blocks in reverse transcription. Capsid restriction by TRIM5 is one of the factors which restricts HIV-1 to the human species. Host PIN1 apparently facilitates the virion uncoating. On the other hand, interactions with PDZD8 or CYPA stabilize the capsid. Encapsulates and protects viral dimeric unspliced genomic RNA (gRNA). Binds these RNAs through its zinc fingers. Acts as a nucleic acid chaperone which is involved in rearangement of nucleic acid secondary structure during gRNA retrotranscription. Also facilitates template switch leading to recombination. As part of the polyprotein, participates in gRNA dimerization, packaging, tRNA incorporation and virion assembly. Its function is as follows. Aspartyl protease that mediates proteolytic cleavages of Gag and Gag-Pol polyproteins during or shortly after the release of the virion from the plasma membrane. Cleavages take place as an ordered, step-wise cascade to yield mature proteins. This process is called maturation. Displays maximal activity during the budding process just prior to particle release from the cell. Also cleaves Nef and Vif, probably concomitantly with viral structural proteins on maturation of virus particles. Hydrolyzes host EIF4GI and PABP1 in order to shut off the capped cellular mRNA translation. The resulting inhibition of cellular protein synthesis serves to ensure maximal viral gene expression and to evade host immune response. Functionally, multifunctional enzyme that converts the viral RNA genome into dsDNA in the cytoplasm, shortly after virus entry into the cell. This enzyme displays a DNA polymerase activity that can copy either DNA or RNA templates, and a ribonuclease H (RNase H) activity that cleaves the RNA strand of RNA-DNA heteroduplexes in a partially processive 3' to 5' endonucleasic mode. Conversion of viral genomic RNA into dsDNA requires many steps. A tRNA(3)-Lys binds to the primer-binding site (PBS) situated at the 5'-end of the viral RNA. RT uses the 3' end of the tRNA primer to perform a short round of RNA-dependent minus-strand DNA synthesis. The reading proceeds through the U5 region and ends after the repeated (R) region which is present at both ends of viral RNA. The portion of the RNA-DNA heteroduplex is digested by the RNase H, resulting in a ssDNA product attached to the tRNA primer. This ssDNA/tRNA hybridizes with the identical R region situated at the 3' end of viral RNA. This template exchange, known as minus-strand DNA strong stop transfer, can be either intra- or intermolecular. RT uses the 3' end of this newly synthesized short ssDNA to perform the RNA-dependent minus-strand DNA synthesis of the whole template. RNase H digests the RNA template except for two polypurine tracts (PPTs) situated at the 5'-end and near the center of the genome. It is not clear if both polymerase and RNase H activities are simultaneous. RNase H probably can proceed both in a polymerase-dependent (RNA cut into small fragments by the same RT performing DNA synthesis) and a polymerase-independent mode (cleavage of remaining RNA fragments by free RTs). Secondly, RT performs DNA-directed plus-strand DNA synthesis using the PPTs that have not been removed by RNase H as primers. PPTs and tRNA primers are then removed by RNase H. The 3' and 5' ssDNA PBS regions hybridize to form a circular dsDNA intermediate. Strand displacement synthesis by RT to the PBS and PPT ends produces a blunt ended, linear dsDNA copy of the viral genome that includes long terminal repeats (LTRs) at both ends. In terms of biological role, catalyzes viral DNA integration into the host chromosome, by performing a series of DNA cutting and joining reactions. This enzyme activity takes place after virion entry into a cell and reverse transcription of the RNA genome in dsDNA. The first step in the integration process is 3' processing. This step requires a complex comprising the viral genome, matrix protein, Vpr and integrase. This complex is called the pre-integration complex (PIC). The integrase protein removes 2 nucleotides from each 3' end of the viral DNA, leaving recessed CA OH's at the 3' ends. In the second step, the PIC enters cell nucleus. This process is mediated through integrase and Vpr proteins, and allows the virus to infect a non dividing cell. This ability to enter the nucleus is specific of lentiviruses, other retroviruses cannot and rely on cell division to access cell chromosomes. In the third step, termed strand transfer, the integrase protein joins the previously processed 3' ends to the 5' ends of strands of target cellular DNA at the site of integration. The 5'-ends are produced by integrase-catalyzed staggered cuts, 5 bp apart. A Y-shaped, gapped, recombination intermediate results, with the 5'-ends of the viral DNA strands and the 3' ends of target DNA strands remaining unjoined, flanking a gap of 5 bp. The last step is viral DNA integration into host chromosome. This involves host DNA repair synthesis in which the 5 bp gaps between the unjoined strands are filled in and then ligated. Since this process occurs at both cuts flanking the HIV genome, a 5 bp duplication of host DNA is produced at the ends of HIV-1 integration. Alternatively, Integrase may catalyze the excision of viral DNA just after strand transfer, this is termed disintegration. The polypeptide is Gag-Pol polyprotein (gag-pol) (Homo sapiens (Human)).